A 183-amino-acid polypeptide reads, in one-letter code: Putative 3-methyladenine DNA glycosylase (183 aa).

It belongs to the DNA glycosylase MPG family.

This Rickettsia conorii (strain ATCC VR-613 / Malish 7) protein is Putative 3-methyladenine DNA glycosylase.